We begin with the raw amino-acid sequence, 296 residues long: Fructose-bisphosphate aldolase class 1 (296 aa).

Glu175 functions as the Proton acceptor in the catalytic mechanism. Residue Lys212 is the Schiff-base intermediate with dihydroxyacetone-P of the active site.

The protein belongs to the class I fructose-bisphosphate aldolase family.

It carries out the reaction beta-D-fructose 1,6-bisphosphate = D-glyceraldehyde 3-phosphate + dihydroxyacetone phosphate. The protein operates within carbohydrate degradation; glycolysis; D-glyceraldehyde 3-phosphate and glycerone phosphate from D-glucose: step 4/4. The sequence is that of Fructose-bisphosphate aldolase class 1 from Staphylococcus epidermidis (strain ATCC 35984 / DSM 28319 / BCRC 17069 / CCUG 31568 / BM 3577 / RP62A).